A 63-amino-acid polypeptide reads, in one-letter code: Beta-toxin NaTx36 (63 aa).

In terms of domain architecture, LCN-type CS-alpha/beta spans 1–62 (KDGYPMRSDG…VYDSATSKCR (62 aa)). Disulfide bonds link Cys-11–Cys-61, Cys-15–Cys-36, Cys-22–Cys-43, and Cys-26–Cys-45.

This sequence belongs to the long (4 C-C) scorpion toxin superfamily. Sodium channel inhibitor family. Beta subfamily. In terms of tissue distribution, expressed by the venom gland.

The protein resides in the secreted. Functionally, beta toxins bind sodium channels (Nav) and shift the voltage of activation towards more negative potentials thereby affecting sodium channel activation and promoting spontaneous and repetitive firing. Only when tested on grasshopper mouse channels, this toxin inhibits Nav1.8/SCN10A sodium currents in a concentration and voltage-dependent manner (IC(50)=680 nM). This toxin hyperpolarizes the voltage dependence of Nav1.8/SCN10A activation, as well as steady-state fast inactivation and slow inactivation. In contrast to most beta scorpion toxins, this toxin inhibits grasshopper mouse Nav1.8/SCN10A currents through modulation of the domain I S4 voltage sensor, and the domain II second S5-S6 extracellular pore loop. The polypeptide is Beta-toxin NaTx36 (Centruroides sculpturatus (Arizona bark scorpion)).